We begin with the raw amino-acid sequence, 738 residues long: uncharacterized protein (738 aa).

Composition is skewed to polar residues over residues 1-34 (MSSS…QVSS), 140-169 (TSSD…QSPP), and 177-197 (KPFS…STKD). Disordered regions lie at residues 1-51 (MSSS…AASI) and 140-197 (TSSD…STKD). The 72-residue stretch at 363–434 (SRLFLGHLNT…QKLHLEISKI (72 aa)) folds into the RRM domain. Residues 466–487 (YPTSSRKRTRSPLMSKGKSYDR) are disordered.

This is an uncharacterized protein from Schizosaccharomyces pombe (strain 972 / ATCC 24843) (Fission yeast).